The sequence spans 486 residues: Malonate-semialdehyde dehydrogenase (486 aa).

Residues F154, K178, E181, R182, and S231 each contribute to the NAD(+) site. C286 acts as the Nucleophile in catalysis. E386 is an NAD(+) binding site.

Belongs to the aldehyde dehydrogenase family. IolA subfamily. In terms of assembly, homotetramer.

The catalysed reaction is 3-oxopropanoate + NAD(+) + CoA + H2O = hydrogencarbonate + acetyl-CoA + NADH + H(+). It carries out the reaction 2-methyl-3-oxopropanoate + NAD(+) + CoA + H2O = propanoyl-CoA + hydrogencarbonate + NADH + H(+). It participates in polyol metabolism; myo-inositol degradation into acetyl-CoA; acetyl-CoA from myo-inositol: step 7/7. In terms of biological role, catalyzes the oxidation of malonate semialdehyde (MSA) and methylmalonate semialdehyde (MMSA) into acetyl-CoA and propanoyl-CoA, respectively. Is involved in a myo-inositol catabolic pathway. Bicarbonate, and not CO2, is the end-product of the enzymatic reaction. The chain is Malonate-semialdehyde dehydrogenase from Bacillus pumilus (strain SAFR-032).